The primary structure comprises 545 residues: CTP synthase (545 aa).

The tract at residues 1-265 is amidoligase domain; the sequence is MSKYIFVTGG…DDLVVQNLGL (265 aa). Ser13 is a binding site for CTP. Ser13 is a binding site for UTP. Residues 14–19 and Asp71 contribute to the ATP site; that span reads SLGKGA. Asp71 and Glu139 together coordinate Mg(2+). CTP contacts are provided by residues 146–148, 186–191, and Lys222; these read DIE and KTKPTQ. UTP is bound by residues 186 to 191 and Lys222; that span reads KTKPTQ. The 252-residue stretch at 290-541 folds into the Glutamine amidotransferase type-1 domain; that stretch reads VIALVGKYVG…MRAAIAQRER (252 aa). Gly351 lines the L-glutamine pocket. Cys378 acts as the Nucleophile; for glutamine hydrolysis in catalysis. Residues 379–382, Glu402, and Arg469 each bind L-glutamine; that span reads LGMQ. Catalysis depends on residues His514 and Glu516.

Belongs to the CTP synthase family. As to quaternary structure, homotetramer.

It catalyses the reaction UTP + L-glutamine + ATP + H2O = CTP + L-glutamate + ADP + phosphate + 2 H(+). The enzyme catalyses L-glutamine + H2O = L-glutamate + NH4(+). It carries out the reaction UTP + NH4(+) + ATP = CTP + ADP + phosphate + 2 H(+). It functions in the pathway pyrimidine metabolism; CTP biosynthesis via de novo pathway; CTP from UDP: step 2/2. With respect to regulation, allosterically activated by GTP, when glutamine is the substrate; GTP has no effect on the reaction when ammonia is the substrate. The allosteric effector GTP functions by stabilizing the protein conformation that binds the tetrahedral intermediate(s) formed during glutamine hydrolysis. Inhibited by the product CTP, via allosteric rather than competitive inhibition. Its function is as follows. Catalyzes the ATP-dependent amination of UTP to CTP with either L-glutamine or ammonia as the source of nitrogen. Regulates intracellular CTP levels through interactions with the four ribonucleotide triphosphates. This Acidithiobacillus ferrooxidans (strain ATCC 23270 / DSM 14882 / CIP 104768 / NCIMB 8455) (Ferrobacillus ferrooxidans (strain ATCC 23270)) protein is CTP synthase.